The primary structure comprises 1081 residues: Mediator of RNA polymerase II transcription subunit 15 (1081 aa).

At serine 2 the chain carries N-acetylserine. The tract at residues 25-49 (LQVLMDINTLNGGSSDTADKIRIHA) is interaction with GCN4. Residues 238 to 286 (QAQAQANNNNNGLPQNGNINNNINIPQQQQMQPPNSSANNNPLQQQSSQ) are disordered. Serine 335 carries the phosphoserine modification. Repeat copies occupy residues 422 to 423 (QA), 424 to 425 (QA), 426 to 427 (QA), 428 to 429 (QA), 430 to 431 (QA), 432 to 433 (QA), 434 to 435 (QA), 436 to 437 (QA), 438 to 439 (QA), 440 to 441 (QA), and 442 to 443 (QA). Residues 422 to 481 (QAQAQAQAQAQAQAQAQAQAQAAQAAQAQAQAQAQAQAQAQAQAQAQAQAQAQAQAQAQA) form a 30 X 2 AA approximate tandem repeats of Q-A region. Residues 444 to 445 (AQ) form a 12; approximate repeat. One copy of the 13; approximate repeat lies at 446–447 (AA). 17 repeat units span residues 448-449 (QA), 450-451 (QA), 452-453 (QA), 454-455 (QA), 456-457 (QA), 458-459 (QA), 460-461 (QA), 462-463 (QA), 464-465 (QA), 466-467 (QA), 468-469 (QA), 470-471 (QA), 472-473 (QA), 474-475 (QA), 476-477 (QA), 478-479 (QA), and 480-481 (QA). Over residues 476–497 (QAQAQAHAQHQPSQQPQQAQQQ) the composition is skewed to low complexity. Disordered regions lie at residues 476 to 505 (QAQAQAHAQHQPSQQPQQAQQQPNPLHGLT) and 692 to 712 (QQQQQHIYPSSTPGVANYSAM). Residues serine 736, serine 752, serine 783, serine 785, and serine 789 each carry the phosphoserine modification. The disordered stretch occupies residues 744-836 (PVSAAATPSL…KTVQSPMGAQ (93 aa)). Residues 749–836 (ATPSLNKTIN…KTVQSPMGAQ (88 aa)) are compositionally biased toward polar residues. Threonine 793 is subject to Phosphothreonine. A phosphoserine mark is found at serine 831, serine 1003, serine 1008, serine 1018, and serine 1034. Positions 1026–1055 (DSKKIKVDSPDDPFMTKSGATTSEKQEVTN) are disordered.

This sequence belongs to the Mediator complex subunit 15 family. As to quaternary structure, component of the Mediator complex, which is composed of at least 21 subunits that form three structurally distinct submodules. The Mediator head module contains MED6, MED8, MED11, SRB4/MED17, SRB5/MED18, ROX3/MED19, SRB2/MED20 and SRB6/MED22, the middle module contains MED1, MED4, NUT1/MED5, MED7, CSE2/MED9, NUT2/MED10, SRB7/MED21 and SOH1/MED31, and the tail module contains MED2, PGD1/MED3, RGR1/MED14, GAL11/MED15 and SIN4/MED16. The head and the middle modules interact directly with RNA polymerase II, whereas the elongated tail module interacts with gene-specific regulatory proteins. GAL11/MED15 interacts with the activator GAL4; the interaction is direct. GAL11/MED15 interacts (via multiple regions) with the activator GCN4; the interaction is direct.

It is found in the nucleus. In terms of biological role, component of the Mediator complex, a coactivator involved in the regulated transcription of nearly all RNA polymerase II-dependent genes. Mediator functions as a bridge to convey information from gene-specific regulatory proteins to the basal RNA polymerase II transcription machinery. The Mediator complex, having a compact conformation in its free form, is recruited to promoters by direct interactions with regulatory proteins and serves for the assembly of a functional pre-initiation complex with RNA polymerase II and the general transcription factors. The Mediator complex unfolds to an extended conformation and partially surrounds RNA polymerase II, specifically interacting with the unphosphorylated form of the C-terminal domain (CTD) of RNA polymerase II. The Mediator complex dissociates from the RNA polymerase II holoenzyme and stays at the promoter when transcriptional elongation begins. It has an important role in the negative regulation of Ty transcription. The sequence is that of Mediator of RNA polymerase II transcription subunit 15 from Saccharomyces cerevisiae (strain ATCC 204508 / S288c) (Baker's yeast).